The primary structure comprises 462 residues: Protoheme IX farnesyltransferase, mitochondrial (462 aa).

7 consecutive transmembrane segments (helical) span residues L152–S172, L173–I193, M237–Y257, I269–A289, P296–L316, S348–F368, and A411–L431.

Belongs to the UbiA prenyltransferase family.

It is found in the mitochondrion membrane. Functionally, converts protoheme IX and farnesyl diphosphate to heme O. The sequence is that of Protoheme IX farnesyltransferase, mitochondrial (COX10) from Debaryomyces hansenii (strain ATCC 36239 / CBS 767 / BCRC 21394 / JCM 1990 / NBRC 0083 / IGC 2968) (Yeast).